The primary structure comprises 432 residues: 3-phosphoshikimate 1-carboxyvinyltransferase (432 aa).

Positions 23, 24, and 28 each coordinate 3-phosphoshikimate. Lys-23 contributes to the phosphoenolpyruvate binding site. Positions 95 and 123 each coordinate phosphoenolpyruvate. 3-phosphoshikimate-binding residues include Ser-167, Gln-169, Asp-316, and Lys-343. A phosphoenolpyruvate-binding site is contributed by Gln-169. The Proton acceptor role is filled by Asp-316. Positions 347 and 391 each coordinate phosphoenolpyruvate.

This sequence belongs to the EPSP synthase family. In terms of assembly, monomer.

It is found in the cytoplasm. It catalyses the reaction 3-phosphoshikimate + phosphoenolpyruvate = 5-O-(1-carboxyvinyl)-3-phosphoshikimate + phosphate. It functions in the pathway metabolic intermediate biosynthesis; chorismate biosynthesis; chorismate from D-erythrose 4-phosphate and phosphoenolpyruvate: step 6/7. Functionally, catalyzes the transfer of the enolpyruvyl moiety of phosphoenolpyruvate (PEP) to the 5-hydroxyl of shikimate-3-phosphate (S3P) to produce enolpyruvyl shikimate-3-phosphate and inorganic phosphate. This is 3-phosphoshikimate 1-carboxyvinyltransferase from Limosilactobacillus fermentum (strain NBRC 3956 / LMG 18251) (Lactobacillus fermentum).